We begin with the raw amino-acid sequence, 323 residues long: Sphingolipid delta(4)-desaturase DES1 (323 aa).

The N-myristoyl glycine moiety is linked to residue glycine 2. Transmembrane regions (helical) follow at residues 41–61 and 68–88; these read HNLI…FYLV and WVIF…TLAI. Residues 89-93 carry the Histidine box-1 motif; the sequence is HEISH. Residues 104 to 124 traverse the membrane as a helical segment; that stretch reads WNRWFGMFANLSLGVPYSISF. Positions 128-132 match the Histidine box-2 motif; that stretch reads HMDHH. Transmembrane regions (helical) follow at residues 152 to 172, 184 to 204, and 209 to 229; these read FFCT…FYAF, YLEI…YYVF, and LVYM…SGHF. Positions 259–263 match the Histidine box-3 motif; sequence HNEHH. At serine 307 the chain carries Phosphoserine.

It belongs to the fatty acid desaturase type 1 family. DEGS subfamily. In terms of assembly, interacts with RLBP1; the interaction increases synthesis of chromophore-precursors by DEGS1. Post-translationally, myristoylation can target the enzyme to the mitochondria leading to an increase in ceramide levels. As to expression, detected in testis. Detected in pachytene spermatocytes and round spermatids. Expressed in retina and retinal pigment epithelium by Mueller cells (at protein level).

It localises to the mitochondrion membrane. The protein resides in the endoplasmic reticulum membrane. It catalyses the reaction an N-acylsphinganine + 2 Fe(II)-[cytochrome b5] + O2 + 2 H(+) = an N-acylsphing-4-enine + 2 Fe(III)-[cytochrome b5] + 2 H2O. The enzyme catalyses all-trans-retinol = 11-cis-retinol. The catalysed reaction is all-trans-retinol = 9-cis-retinol. It carries out the reaction all-trans-retinol = 13-cis-retinol. It catalyses the reaction 11-cis-retinol = 13-cis-retinol. The enzyme catalyses 11-cis-retinol = 9-cis-retinol. Functionally, has sphingolipid-delta-4-desaturase activity. Converts D-erythro-sphinganine to D-erythro-sphingosine (E-sphing-4-enine). Catalyzes the equilibrium isomerization of retinols. This is Sphingolipid delta(4)-desaturase DES1 from Mus musculus (Mouse).